Reading from the N-terminus, the 268-residue chain is Nuclear protein UL4 homolog (268 aa).

The protein belongs to the alphaherpesvirinae HHV-1 UL4 family.

It is found in the host nucleus. In Gallid herpesvirus 2 (strain Chicken/Md5/ATCC VR-987) (GaHV-2), this protein is Nuclear protein UL4 homolog (MDV016).